The following is a 192-amino-acid chain: Adenylate kinase (192 aa).

10 to 18 (GVPGVGGTT) lines the ATP pocket.

The protein belongs to the archaeal adenylate kinase family. As to quaternary structure, monomer.

It localises to the cytoplasm. The catalysed reaction is AMP + ATP = 2 ADP. This chain is Adenylate kinase (adkA), found in Methanotorris igneus (Methanococcus igneus).